The primary structure comprises 193 residues: uncharacterized protein (193 aa).

The disordered stretch occupies residues 158–193 (YNPIYDDHNPLPPEKKKSILSRTRSTKLSSGEITPV). Residues 162 to 174 (YDDHNPLPPEKKK) show a composition bias toward basic and acidic residues. Positions 177–193 (LSRTRSTKLSSGEITPV) are enriched in polar residues.

This is an uncharacterized protein from Micromonas pusilla (Picoplanktonic green alga).